Consider the following 230-residue polypeptide: 2,3-bisphosphoglycerate-dependent phosphoglycerate mutase 2 (230 aa).

Substrate-binding positions include 8-15, 21-22, Arg-60, 87-90, Lys-98, 114-115, and 183-184; these read RHGQSEWN, TG, ERHY, RR, and GN. His-9 (tele-phosphohistidine intermediate) is an active-site residue. Glu-87 serves as the catalytic Proton donor/acceptor.

Belongs to the phosphoglycerate mutase family. BPG-dependent PGAM subfamily.

It carries out the reaction (2R)-2-phosphoglycerate = (2R)-3-phosphoglycerate. It functions in the pathway carbohydrate degradation; glycolysis; pyruvate from D-glyceraldehyde 3-phosphate: step 3/5. Its function is as follows. Catalyzes the interconversion of 2-phosphoglycerate and 3-phosphoglycerate. In Lactiplantibacillus plantarum (strain ATCC BAA-793 / NCIMB 8826 / WCFS1) (Lactobacillus plantarum), this protein is 2,3-bisphosphoglycerate-dependent phosphoglycerate mutase 2.